The primary structure comprises 5068 residues: Protein piccolo (5068 aa).

Low complexity predominate over residues 1 to 20; the sequence is MGNEASLEGEGLPEGLAAAA. 2 disordered regions span residues 1–143 and 173–524; these read MGNE…DFKE and FDLI…QAPA. The segment covering 93-102 has biased composition (pro residues); that stretch reads PGKPPDPGRP. Composition is skewed to basic and acidic residues over residues 111 to 122, 133 to 143, and 185 to 199; these read RTTDTFRSEQKL, KESKSRTDFKE, and ETTKKQKVAQKDQGK. Residue serine 212 is modified to Phosphoserine. Over residues 232-241 the composition is skewed to polar residues; that stretch reads PSKSVSSQQA. The segment covering 252–279 has biased composition (low complexity); sequence AKPSQQSPAQTPAQQAKPVAQQPGPAKA. Positions 319–334 are enriched in polar residues; that stretch reads TSLQQPGPKSLAQTPG. 2 stretches are compositionally biased toward pro residues: residues 391-407 and 416-487; these read PTKPSPQQPIPAKPQPQ and PQQP…PQPQ. Positions 401 to 500 are 10 X 10 AA tandem approximate repeats of P-A-K-P-Q-P-Q-Q-P-X; sequence PAKPQPQQPV…LGKPSAQQPS (100 aa). The span at 495–508 shows a compositional bias: polar residues; the sequence is SAQQPSKSISQTVT. Low complexity predominate over residues 515-524; it reads PPTSAAQAPA. The segment at 532–556 adopts a C4-type zinc-finger fold; the sequence is CPLCNTTELLLHTPEKANFNTCTEC. Disordered regions lie at residues 594–867, 883–1005, 1057–1345, and 1364–1803; these read AAIP…TVTG, LIST…TELN, LGDM…PSDL, and VGEK…SDPE. A compositionally biased stretch (polar residues) spans 610 to 625; it reads QPATASKSPVPSQQAS. Basic and acidic residues predominate over residues 626 to 644; sequence PKKELPSKQDSPKAPESKK. The span at 709–738 shows a compositional bias: low complexity; that stretch reads SPSSAAATSKPAILSSQVQAQAQVTTAPPL. The segment covering 782 to 795 has biased composition (basic and acidic residues); that stretch reads ESKDPVQKKEEPKK. Low complexity predominate over residues 809-830; sequence VPKGSPTPSGTRPTTGQATPQS. 2 positions are modified to phosphoserine: serine 844 and serine 856. 2 stretches are compositionally biased toward polar residues: residues 856 to 865 and 883 to 893; these read SQPTTPQETV and LISTAGQQAPH. Threonine 860 carries the post-translational modification Phosphothreonine. The C4-type zinc-finger motif lies at 997 to 1020; the sequence is CPLCRTELNVGSQDPPNFNTCTEC. Positions 1073 to 1085 are enriched in pro residues; sequence SPVPAPAEPPPQK. Over residues 1097–1116 the composition is skewed to basic and acidic residues; it reads KETEVKAETEKQIPEKETPS. Threonine 1120 bears the Phosphothreonine mark. Composition is skewed to basic and acidic residues over residues 1144–1165, 1172–1186, 1244–1253, and 1262–1283; these read PEKKPSEEEKALPADKKEKKPP, LEEKKPIPDDQKLPP, PKDRQKESRD, and TAKEGRGEPSKDRTEKEEDKSD. The segment covering 1290–1306 has biased composition (polar residues); sequence PKSPQGLSDTGYSSDGI. 8 positions are modified to phosphoserine: serine 1292, serine 1302, serine 1303, serine 1332, serine 1334, serine 1337, serine 1338, and serine 1341. Over residues 1319–1333 the composition is skewed to basic and acidic residues; it reads SDEKDLLKGLKKDSF. Low complexity predominate over residues 1334-1343; it reads SQESSPSSPS. The segment covering 1374-1392 has biased composition (polar residues); the sequence is PQKVSPEQPQDQQKTQTPS. Over residues 1405–1444 the composition is skewed to basic and acidic residues; sequence KESQEKKVTSKKDSAQGFPSRKEHKENPELVDDLSPRRAS. Phosphoserine occurs at positions 1439, 1451, 1452, 1454, 1457, 1481, 1484, 1505, and 1507. Positions 1499-1511 are enriched in acidic residues; sequence SADEDASGSEDEE. Phosphothreonine is present on threonine 1552. 3 positions are modified to phosphoserine: serine 1553, serine 1563, and serine 1575. Acidic residues predominate over residues 1566 to 1575; it reads DEDDETFDES. Residues 1576–1587 show a composition bias toward basic and acidic residues; the sequence is PELKFRETKSQE. Residues 1606 to 1624 are compositionally biased toward polar residues; it reads ELNSTVTDKYSAESSQKKT. Over residues 1628–1638 the composition is skewed to acidic residues; it reads FDEEPELEMES. A Phosphoserine modification is found at serine 1638. Threonine 1640 carries the post-translational modification Phosphothreonine. Serine 1642 and serine 1647 each carry phosphoserine. Residues 1650–1667 show a composition bias toward polar residues; that stretch reads EGSSSLHASSFTPGTSPT. Residues 1707–1720 are compositionally biased toward acidic residues; sequence DSSEEEELREEEEL. A phosphoserine mark is found at serine 1708 and serine 1709. A compositionally biased stretch (basic and acidic residues) spans 1721–1734; that stretch reads LKEQEKQRELEQQQ. At threonine 1760 the chain carries Phosphothreonine. At serine 1766 the chain carries Phosphoserine. A compositionally biased stretch (basic and acidic residues) spans 1775–1790; it reads EELRQAAEMEELHRSS. Phosphoserine is present on residues serine 1795, serine 1800, serine 1808, and serine 1829. 2 disordered regions span residues 2104–2126 and 2261–2377; these read PSESATSVPPSDTPSLTSSISSV and EAEL…AAAA. Residues 2109–2126 show a composition bias toward low complexity; that stretch reads TSVPPSDTPSLTSSISSV. Residues 2277–2291 are compositionally biased toward polar residues; it reads TPSSQTKEQPGSPHS. Residues 2334–2368 show a composition bias toward pro residues; that stretch reads QPPPPPPPPPPPPPPPPPPPPPPLPPATSPKPPTY. Serine 2495 carries the post-translational modification Phosphoserine. A glycan (O-linked (GlcNAc) threonine) is linked at threonine 2686. Serine 2960 is a glycosylation site (O-linked (GlcNAc) serine). Phosphothreonine is present on threonine 2998. Disordered regions lie at residues 3334-3443 and 3490-3556; these read KEEK…SKVS and KGGS…LYSP. At serine 3358 the chain carries Phosphoserine. The span at 3361–3370 shows a compositional bias: basic and acidic residues; it reads DDPRNLKKIV. Position 3372 is a phosphoserine (serine 3372). Phosphothreonine is present on residues threonine 3376 and threonine 3403. The segment covering 3403–3412 has biased composition (acidic residues); it reads TDDEDQDEWD. A compositionally biased stretch (polar residues) spans 3495–3507; that stretch reads GCQTETDPDTQSP. 11 positions are modified to phosphoserine: serine 3506, serine 3514, serine 3545, serine 3549, serine 3555, serine 3558, serine 3561, serine 3582, serine 3608, serine 3610, and serine 3616. Disordered stretches follow at residues 3576–3679 and 3760–3797; these read PLPD…RRRM and DYMSDSEVSSTRPSRVESQHGIERPRTAPQTEFSQFIP. 2 stretches are compositionally biased toward polar residues: residues 3636-3645 and 3661-3673; these read KGSQTTSGTQ and STGTQSTYSTMGT. Serine 3763 bears the Phosphoserine mark. Positions 3773 to 3785 are enriched in basic and acidic residues; it reads SRVESQHGIERPR. Polar residues predominate over residues 3787–3797; the sequence is APQTEFSQFIP. 3 positions are modified to phosphoserine: serine 4016, serine 4042, and serine 4132. Disordered stretches follow at residues 4207–4231 and 4254–4273; these read ADKPYSSGSRSRPSSRPSSVYGLDL and VSFGHSSSSARTKPTSLPIS. Positions 4210-4231 are enriched in low complexity; sequence PYSSGSRSRPSSRPSSVYGLDL. A compositionally biased stretch (polar residues) spans 4257–4273; that stretch reads GHSSSSARTKPTSLPIS. Phosphoserine is present on residues serine 4286, serine 4290, serine 4293, serine 4322, and serine 4358. Positions 4317-4339 are disordered; the sequence is RDQFGSSHSLPEVQQHMREESRT. The region spanning 4424-4518 is the PDZ domain; it reads RIKITRDSKD…EAEICVRLDL (95 aa). The segment at 4574–4620 is disordered; it reads KGAHAHSGPTSAGSSSVPSPGQPGSPSVSKKKHGGSKPTDVSKTASH. Residues 4578 to 4601 are compositionally biased toward low complexity; it reads AHSGPTSAGSSSVPSPGQPGSPSV. Residue serine 4592 is modified to Phosphoserine. The C2 1 domain maps to 4622–4751; it reads ITGEIQLQIN…SHLDNTPRWY (130 aa). Ca(2+)-binding residues include aspartate 4651 and aspartate 4657. A Phosphoserine modification is found at serine 4706. Residues aspartate 4721, aspartate 4723, serine 4726, and aspartate 4729 each contribute to the Ca(2+) site. 2 disordered regions span residues 4758-4834 and 4857-4891; these read ESIE…SVAQ and QPTKPTNHRPAETSVSTGSSGSSVGSGYSVDSEGS. 2 stretches are compositionally biased toward low complexity: residues 4766–4778 and 4805–4815; these read HSSQNSQQSPKPS and SSPGSSKSSSE. A compositionally biased stretch (polar residues) spans 4823 to 4834; the sequence is PSRSQSKTSVAQ. A compositionally biased stretch (low complexity) spans 4870-4891; the sequence is SVSTGSSGSSVGSGYSVDSEGS. Residues 4933–5058 enclose the C2 2 domain; it reads VMGEIKLALK…DLRKRIVNWH (126 aa).

Interacts with BSN, ERC2/CAST1, RIMS1 and UNC13A. Interacts (via C-terminus) with TRIO (via N-terminus). Interacts with CTBP1. Interacts with SIAH1; this interaction negatively regulates SIAH1 E3 ligase activity. Directly interacts with GIT1 and GIT2. The cofactor is Ca(2+). As to expression, highly expressed in brain. Moderately expressed in pituitary gland and pancreatic islets. Low levels found in stomach.

The protein localises to the presynaptic active zone. Functionally, scaffold protein of the presynaptic cytomatrix at the active zone (CAZ) which is the place in the synapse where neurotransmitter is released. After synthesis, participates in the formation of Golgi-derived membranous organelles termed Piccolo-Bassoon transport vesicles (PTVs) that are transported along axons to sites of nascent synaptic contacts. At the presynaptic active zone, regulates the spatial organization of synaptic vesicle cluster, the protein complexes that execute membrane fusion and compensatory endocytosis. Organizes as well the readily releasable pool of synaptic vesicles and safeguards a fraction of them to be not immediately available for action potential-induced release. Also functions in processes other than assembly such as the regulation of specific presynaptic protein ubiquitination by interacting with SIAH1 or the regulation of presynaptic autophagy. Also mediates synapse to nucleus communication leading to reconfiguration of gene expression by associating with the transcriptional corepressor CTBP1 and by subsequently reducing the size of its pool available for nuclear import. The sequence is that of Protein piccolo from Mus musculus (Mouse).